A 408-amino-acid chain; its full sequence is Argininosuccinate synthase (408 aa).

ATP contacts are provided by residues 11 to 19 (AYSGGLDTS) and Ala-38. 2 residues coordinate L-citrulline: Tyr-91 and Ser-96. ATP is bound at residue Gly-121. The L-aspartate site is built by Thr-123, Asn-127, and Asp-128. Asn-127 lines the L-citrulline pocket. Arg-131, Ser-182, Ser-191, Glu-267, and Tyr-279 together coordinate L-citrulline.

This sequence belongs to the argininosuccinate synthase family. Type 1 subfamily. Homotetramer.

It is found in the cytoplasm. The catalysed reaction is L-citrulline + L-aspartate + ATP = 2-(N(omega)-L-arginino)succinate + AMP + diphosphate + H(+). It functions in the pathway amino-acid biosynthesis; L-arginine biosynthesis; L-arginine from L-ornithine and carbamoyl phosphate: step 2/3. The polypeptide is Argininosuccinate synthase (Paracoccus denitrificans (strain Pd 1222)).